Reading from the N-terminus, the 49-residue chain is Large ribosomal subunit protein bL33 (49 aa).

This sequence belongs to the bacterial ribosomal protein bL33 family.

In Clostridioides difficile (strain 630) (Peptoclostridium difficile), this protein is Large ribosomal subunit protein bL33.